The following is a 347-amino-acid chain: MKMDERKQQILLAIIKDYINTAEPVGSRTISRKYKLGVSPATIRNEMSDLEEMGYIEQPHTSAGRIPSNLGYRYYVDCLMQREQLSEEEEVTIRRGYENKVREVGEVLNRTGRMMAQLTHYTALVQMPSFRRSAYKHVQMVLMGPSQAILIVVMDTGAVHHQMMTVPESITQQDLDQISSVLNAKLQGRTMDNIRLTLIKEIYFELSKHRSILDLALELMQDRVISVAEDKIYLEGVFNILNQPEFHNVERVKILLSLLEQEDTLKDILDFTRDRQGITIKIGNENLRQEIQDCSMVTATYQVGDKILGTIGVLGPTRMDYARVVTVIDCMSRNLSRTLDRILKGQV.

This sequence belongs to the HrcA family.

Negative regulator of class I heat shock genes (grpE-dnaK-dnaJ and groELS operons). Prevents heat-shock induction of these operons. The chain is Heat-inducible transcription repressor HrcA from Desulforamulus reducens (strain ATCC BAA-1160 / DSM 100696 / MI-1) (Desulfotomaculum reducens).